Here is a 360-residue protein sequence, read N- to C-terminus: DNA polymerase IV (360 aa).

The 183-residue stretch at 9–191 (IMHLDIDAFY…LNINKIPYIG (183 aa)) folds into the UmuC domain. Mg(2+) is bound by residues D13 and D108. Residue E109 is part of the active site.

It belongs to the DNA polymerase type-Y family. In terms of assembly, monomer. Mg(2+) is required as a cofactor.

It localises to the cytoplasm. It carries out the reaction DNA(n) + a 2'-deoxyribonucleoside 5'-triphosphate = DNA(n+1) + diphosphate. In terms of biological role, poorly processive, error-prone DNA polymerase involved in untargeted mutagenesis. Copies undamaged DNA at stalled replication forks, which arise in vivo from mismatched or misaligned primer ends. These misaligned primers can be extended by PolIV. Exhibits no 3'-5' exonuclease (proofreading) activity. May be involved in translesional synthesis, in conjunction with the beta clamp from PolIII. The chain is DNA polymerase IV from Ureaplasma parvum serovar 3 (strain ATCC 27815 / 27 / NCTC 11736).